We begin with the raw amino-acid sequence, 612 residues long: Glutamine--fructose-6-phosphate aminotransferase [isomerizing] (612 aa).

The active-site Nucleophile; for GATase activity is the cysteine 2. The 216-residue stretch at 2-217 folds into the Glutamine amidotransferase type-2 domain; that stretch reads CGIVGGVAER…EGDIARLTRD (216 aa). 2 consecutive SIS domains span residues 283-428 and 461-602; these read AEAD…VKEQ and LSEL…VDQP. Lysine 607 serves as the catalytic For Fru-6P isomerization activity.

As to quaternary structure, homodimer.

The protein resides in the cytoplasm. The enzyme catalyses D-fructose 6-phosphate + L-glutamine = D-glucosamine 6-phosphate + L-glutamate. Functionally, catalyzes the first step in hexosamine metabolism, converting fructose-6P into glucosamine-6P using glutamine as a nitrogen source. The chain is Glutamine--fructose-6-phosphate aminotransferase [isomerizing] from Acinetobacter baylyi (strain ATCC 33305 / BD413 / ADP1).